The primary structure comprises 661 residues: Acetyl-coenzyme A synthetase (661 aa).

CoA-binding positions include 199 to 202 (RGGK) and Thr-317. ATP-binding positions include 393 to 395 (GEP), 417 to 422 (DTFWQT), Asp-508, and Arg-523. Position 531 (Ser-531) interacts with CoA. Residue Arg-534 participates in ATP binding. CoA is bound at residue Arg-596.

Belongs to the ATP-dependent AMP-binding enzyme family.

It catalyses the reaction acetate + ATP + CoA = acetyl-CoA + AMP + diphosphate. The sequence is that of Acetyl-coenzyme A synthetase (ACS-1) from Coprinopsis cinerea (Inky cap fungus).